A 217-amino-acid chain; its full sequence is GTP cyclohydrolase 1 (217 aa).

Zn(2+)-binding residues include cysteine 109, histidine 112, and cysteine 180.

Belongs to the GTP cyclohydrolase I family. As to quaternary structure, toroid-shaped homodecamer, composed of two pentamers of five dimers.

The catalysed reaction is GTP + H2O = 7,8-dihydroneopterin 3'-triphosphate + formate + H(+). Its pathway is cofactor biosynthesis; 7,8-dihydroneopterin triphosphate biosynthesis; 7,8-dihydroneopterin triphosphate from GTP: step 1/1. The sequence is that of GTP cyclohydrolase 1 from Vibrio campbellii (strain ATCC BAA-1116).